Here is a 185-residue protein sequence, read N- to C-terminus: Putative manganese efflux pump MntP (185 aa).

6 consecutive transmembrane segments (helical) span residues 8–28 (LFVI…SIGL), 42–62 (ISFG…GVLF), 66–86 (ILVI…ILML), 103–123 (MYFI…FTVL), 137–157 (IFIG…SGYL), and 165–185 (KYAN…MIFM).

Belongs to the MntP (TC 9.B.29) family.

The protein resides in the cell membrane. Its function is as follows. Probably functions as a manganese efflux pump. In Clostridium novyi (strain NT), this protein is Putative manganese efflux pump MntP.